Reading from the N-terminus, the 392-residue chain is HCLS1-binding protein 3 (392 aa).

Met1 is subject to N-acetylmethionine. Phosphoserine is present on residues Ser3, Ser139, and Ser194. Residues 19-142 enclose the PX domain; that stretch reads GLDLTVPQHQ…EFLGTRSPGA (124 aa). Disordered regions lie at residues 138–162, 174–265, and 319–364; these read RSPG…QTGN, DQVA…PLKL, and GAEP…KPQE. Acidic residues predominate over residues 190–201; it reads DAEESLEEEEAL. The span at 208–220 shows a compositional bias: basic residues; it reads RSKKPKKHPKVAV. Ser249 is modified (phosphoserine). Pro residues predominate over residues 325–335; that stretch reads KPQLKPKPPVA. At Lys337 the chain carries N6-acetyllysine.

Binds HCLS1. Interacts with the SH3 domain of HCLS1 in vitro.

In terms of biological role, may be a modulator of IL-2 signaling. The sequence is that of HCLS1-binding protein 3 (HS1BP3) from Homo sapiens (Human).